The following is a 610-amino-acid chain: Preterminal protein (610 aa).

The tract at residues 288–379 (TLRSGTQTGL…ESFSDDVGLS (92 aa)) is disordered. The Nuclear localization signal motif lies at 328–337 (SLPIRRRRRR). Positions 331 to 340 (IRRRRRRGTR) are enriched in basic residues. Positions 341-350 (RQVEREDSVR) are enriched in basic and acidic residues. Ser-549 bears the O-(5'-phospho-DNA)-serine mark.

The protein belongs to the adenoviridae terminal protein family. Heterodimer with the polymerase; this heterodimer binds to bp 9 to 18 of the genome. Interacts with host POU2F1; POU2F1 binds to the auxiliary sequences in the inverted terminal repeats and tethers the pTP-POL heterodimer to the origin DNA thereby participating in the assembly of the pre-initiation complex (POL-TP-DBP-NFIA-POU2F1). In terms of processing, preterminal protein is used to replicate viral genome, upon genomic encapsidation it is processed first into iTP and finally into TP by adenovirus protease.

The protein localises to the host nucleus matrix. Functionally, protein covalently bound to the viral DNA that acts as a primer for viral genomic replication by DNA strand displacement. Assembles on the viral origin of replication in an initiation complex with viral polymerase, DBP, host NFIA and host POU2F1/OCT1. During initiation, the polymerase covalently couples the first dCTP with Ser-580 of pTP. The terminal protein stimulates the template activity over 20 fold compared to protein-free templates. Neo-synthesized viral genomes are linked to two preterminal proteins, one for each 5' end. These new genomes are encapsidated in the nucleus, and during capsid maturation by viral protease, preterminal protein is first cleaved into intermediary (iTP), then into mature TP. May play a role in host nuclear matrix localization of genomic DNA. The polypeptide is Preterminal protein (Snake adenovirus serotype 1 (SnAdV-1)).